The chain runs to 310 residues: Probable cell division protein WhiA (310 aa).

Residues 274-308 constitute a DNA-binding region (H-T-H motif); the sequence is SLKELGTLVPGGPISKSGINHRLRKINQFAEQLQK.

This sequence belongs to the WhiA family.

In terms of biological role, involved in cell division and chromosome segregation. In Lactiplantibacillus plantarum (strain ATCC BAA-793 / NCIMB 8826 / WCFS1) (Lactobacillus plantarum), this protein is Probable cell division protein WhiA.